A 204-amino-acid polypeptide reads, in one-letter code: Recombination protein RecR (204 aa).

The C4-type zinc finger occupies 58–75 (CSICQNVTDRGDDPCSIC). One can recognise a Toprim domain in the interval 83–181 (SKICVVESPP…EVTKIARGIP (99 aa)).

It belongs to the RecR family.

May play a role in DNA repair. It seems to be involved in an RecBC-independent recombinational process of DNA repair. It may act with RecF and RecO. The chain is Recombination protein RecR from Chlorobium phaeobacteroides (strain BS1).